The following is a 137-amino-acid chain: Acidic phospholipase A2 beta-bungarotoxin A chain (137 aa).

Positions 1 to 9 (AVCVSLLGA) are cleaved as a signal peptide. A propeptide spanning residues 10–17 (ANIPPHPL) is cleaved from the precursor. 6 disulfide bridges follow: Cys-44–Cys-136, Cys-46–Cys-62, Cys-61–Cys-117, Cys-68–Cys-110, Cys-78–Cys-103, and Cys-96–Cys-108. Ca(2+)-binding residues include Tyr-45, Gly-47, and Gly-49. His-65 is an active-site residue. Asp-66 provides a ligand contact to Ca(2+). Residue Asp-111 is part of the active site.

The protein belongs to the phospholipase A2 family. Group I subfamily. D49 sub-subfamily. As to quaternary structure, heterodimer; disulfide-linked. The A chain has phospholipase A2 activity and the B chain shows homology with the basic protease inhibitors. Ca(2+) serves as cofactor. Expressed by the venom gland.

It localises to the secreted. The enzyme catalyses a 1,2-diacyl-sn-glycero-3-phosphocholine + H2O = a 1-acyl-sn-glycero-3-phosphocholine + a fatty acid + H(+). Beta bungarotoxin is a presynaptic neurotoxin. The A chain has phospholipase activity. PLA2 catalyzes the calcium-dependent hydrolysis of the 2-acyl groups in 3-sn-phosphoglycerides. The sequence is that of Acidic phospholipase A2 beta-bungarotoxin A chain from Bungarus candidus (Malayan krait).